The following is a 151-amino-acid chain: Spore coat polysaccharide biosynthesis protein SpsL (151 aa).

It to dTDP-4-dehydrorhamnose reductase.

It functions in the pathway spore coat biogenesis; spore coat polysaccharide biosynthesis. The chain is Spore coat polysaccharide biosynthesis protein SpsL (spsL) from Bacillus subtilis (strain 168).